Consider the following 743-residue polypeptide: Phosphoribosylformylglycinamidine synthase subunit PurL (743 aa).

H54 is a catalytic residue. ATP-binding residues include Y57 and K96. Residue E98 participates in Mg(2+) binding. Substrate is bound by residues 99–102 (SHNH) and R121. H100 serves as the catalytic Proton acceptor. D122 is a Mg(2+) binding site. Q245 provides a ligand contact to substrate. Mg(2+) is bound at residue D273. 317–319 (ESQ) provides a ligand contact to substrate. D501 and G538 together coordinate ATP. N539 lines the Mg(2+) pocket. S541 is a substrate binding site.

The protein belongs to the FGAMS family. In terms of assembly, monomer. Part of the FGAM synthase complex composed of 1 PurL, 1 PurQ and 2 PurS subunits.

Its subcellular location is the cytoplasm. The catalysed reaction is N(2)-formyl-N(1)-(5-phospho-beta-D-ribosyl)glycinamide + L-glutamine + ATP + H2O = 2-formamido-N(1)-(5-O-phospho-beta-D-ribosyl)acetamidine + L-glutamate + ADP + phosphate + H(+). Its pathway is purine metabolism; IMP biosynthesis via de novo pathway; 5-amino-1-(5-phospho-D-ribosyl)imidazole from N(2)-formyl-N(1)-(5-phospho-D-ribosyl)glycinamide: step 1/2. Its function is as follows. Part of the phosphoribosylformylglycinamidine synthase complex involved in the purines biosynthetic pathway. Catalyzes the ATP-dependent conversion of formylglycinamide ribonucleotide (FGAR) and glutamine to yield formylglycinamidine ribonucleotide (FGAM) and glutamate. The FGAM synthase complex is composed of three subunits. PurQ produces an ammonia molecule by converting glutamine to glutamate. PurL transfers the ammonia molecule to FGAR to form FGAM in an ATP-dependent manner. PurS interacts with PurQ and PurL and is thought to assist in the transfer of the ammonia molecule from PurQ to PurL. The protein is Phosphoribosylformylglycinamidine synthase subunit PurL of Halalkalibacterium halodurans (strain ATCC BAA-125 / DSM 18197 / FERM 7344 / JCM 9153 / C-125) (Bacillus halodurans).